Consider the following 171-residue polypeptide: Adenine phosphoribosyltransferase (171 aa).

Belongs to the purine/pyrimidine phosphoribosyltransferase family. In terms of assembly, homodimer.

It is found in the cytoplasm. The catalysed reaction is AMP + diphosphate = 5-phospho-alpha-D-ribose 1-diphosphate + adenine. The protein operates within purine metabolism; AMP biosynthesis via salvage pathway; AMP from adenine: step 1/1. Functionally, catalyzes a salvage reaction resulting in the formation of AMP, that is energically less costly than de novo synthesis. This chain is Adenine phosphoribosyltransferase, found in Ruminiclostridium cellulolyticum (strain ATCC 35319 / DSM 5812 / JCM 6584 / H10) (Clostridium cellulolyticum).